A 1163-amino-acid chain; its full sequence is Pesticidal crystal protein Cry26Aa (1163 aa).

The protein belongs to the delta endotoxin family.

Functionally, promotes colloidosmotic lysis by binding to the midgut epithelial cells of insects. The protein is Pesticidal crystal protein Cry26Aa (cry26Aa) of Bacillus thuringiensis subsp. finitimus.